Reading from the N-terminus, the 142-residue chain is Baculoviral IAP repeat-containing protein 5 (142 aa).

A BIR repeat occupies 18–88 (RVSTFKNWPF…KHSSGCAFLS (71 aa)). Phosphoserine; by AURKC is present on Ser20. Residue Lys23 is modified to N6-acetyllysine. A Phosphothreonine; by CDK1 and CDK15 modification is found at Thr34. At Thr48 the chain carries Phosphothreonine. Zn(2+)-binding residues include Cys57, Cys60, His77, and Cys84. Lys90, Lys110, Lys112, and Lys115 each carry N6-acetyllysine. Thr117 bears the Phosphothreonine; by AURKB mark. At Lys129 the chain carries N6-acetyllysine.

The protein belongs to the IAP family. Monomer or homodimer. Exists as a homodimer in the apo state and as a monomer in the CPC-bound state. The monomer protects cells against apoptosis more efficiently than the dimer. Only the dimeric form is capable of enhancing tubulin stability in cells. When phosphorylated, interacts with LAMTOR5/HBXIP; the resulting complex binds pro-CASP9, as well as active CASP9, but much less efficiently. Component of the chromosomal passenger complex (CPC) composed of at least BIRC5/survivin, CDCA8/borealin, INCENP, AURKB or AURKC; in the complex forms a triple-helix bundle-based subcomplex with INCENP and CDCA8. Interacts with JTB. Interacts (via BIR domain) with histone H3 phosphorylated at 'Thr-3' (H3pT3). Interacts with EVI5. Interacts with GTP-bound RAN in both the S and M phases of the cell cycle. Interacts with USP9X. Interacts with tubulin. Interacts with BIRC2/c-IAP1. The acetylated form at Lys-129 interacts with STAT3. The monomeric form deacetylated at Lys-129 interacts with XPO1/CRM1. The monomeric form interacts with XIAP/BIRC4. Both the dimeric and monomeric form can interact with DIABLO/SMAC. Interacts with BIRC6/bruce. Interacts with FBXL7; this interaction facilitates the polyubiquitination and subsequent proteasomal degradation of BIRC5 by the SCF(FBXL7) E3 ubiquitin-protein ligase complex. Post-translationally, ubiquitinated by the Cul9-RING ubiquitin-protein ligase complex, leading to its degradation. Ubiquitination is required for centrosomal targeting. Deubiquitinated by USP35 or USP38; leading to stabilization. In terms of processing, acetylation at Lys-129 results in its homodimerization, while deacetylation promotes the formation of monomers which heterodimerize with XPO1/CRM1 which facilitates its nuclear export. The acetylated form represses STAT3 transactivation. The dynamic equilibrium between its acetylation and deacetylation at Lys-129 determines its interaction with XPO1/CRM1, its subsequent subcellular localization, and its ability to inhibit STAT3 transactivation. In vitro phosphorylation at Thr-117 by AURKB prevents interaction with INCENP and localization to mitotic chromosomes. Phosphorylation at Thr-48 by CK2 is critical for its mitotic and anti-apoptotic activities. Phosphorylation at Thr-34 by CDK15 is critical for its anti-apoptotic activity. Phosphorylation at Ser-20 by AURKC is critical for regulation of proper chromosome alignment and segregation, and possibly cytokinesis.

The protein resides in the cytoplasm. It localises to the nucleus. Its subcellular location is the chromosome. The protein localises to the centromere. It is found in the cytoskeleton. The protein resides in the spindle. It localises to the kinetochore. Its subcellular location is the midbody. In terms of biological role, multitasking protein that has dual roles in promoting cell proliferation and preventing apoptosis. Component of a chromosome passage protein complex (CPC) which is essential for chromosome alignment and segregation during mitosis and cytokinesis. Acts as an important regulator of the localization of this complex; directs CPC movement to different locations from the inner centromere during prometaphase to midbody during cytokinesis and participates in the organization of the center spindle by associating with polymerized microtubules. Involved in the recruitment of CPC to centromeres during early mitosis via association with histone H3 phosphorylated at 'Thr-3' (H3pT3) during mitosis. The complex with RAN plays a role in mitotic spindle formation by serving as a physical scaffold to help deliver the RAN effector molecule TPX2 to microtubules. May counteract a default induction of apoptosis in G2/M phase. The acetylated form represses STAT3 transactivation of target gene promoters. May play a role in neoplasia. Inhibitor of CASP3 and CASP7. Essential for the maintenance of mitochondrial integrity and function. This is Baculoviral IAP repeat-containing protein 5 (BIRC5) from Bos taurus (Bovine).